The sequence spans 543 residues: uncharacterized protein (543 aa).

In terms of domain architecture, Radical SAM core spans 203–460 (NYPYIIAEIE…FLWFKEKVRE (258 aa)). Residues 470-534 (VVPKGTILRD…RRSITGKVVR (65 aa)) form the TRAM domain.

This is an uncharacterized protein from Methanocaldococcus jannaschii (strain ATCC 43067 / DSM 2661 / JAL-1 / JCM 10045 / NBRC 100440) (Methanococcus jannaschii).